The following is a 116-amino-acid chain: Pol polyprotein (116 aa).

Functionally, catalyzes viral DNA integration into the host chromosome, by performing a series of DNA cutting and joining reactions. In Mus musculus (Mouse), this protein is Pol polyprotein (pol).